We begin with the raw amino-acid sequence, 376 residues long: 12-oxophytodienoate reductase 1 (376 aa).

FMN is bound by residues 35-37 (PLT), A68, and Q110. Substrate is bound by residues S143 and 187 to 190 (HGAH). Y192 serves as the catalytic Proton donor. Position 239 (R239) interacts with FMN. R279 contacts substrate. FMN-binding positions include G309 and 330 to 331 (GR).

Belongs to the NADH:flavin oxidoreductase/NADH oxidase family. FMN is required as a cofactor. In terms of tissue distribution, constitutively expressed in roots, leaves, cotyledons, cells culture and to a lower extent in flowers.

It is found in the cytoplasm. It carries out the reaction (1S,2S)-OPC-8 + NADP(+) = (9S,13S,15Z)-12-oxophyto-10,15-dienoate + NADPH + H(+). The protein operates within lipid metabolism; oxylipin biosynthesis. Functionally, specifically cleaves olefinic bonds in alpha,beta-unsaturated carbonyls and may be involved in detoxification or modification of these reactive compounds. May be involved in the biosynthesis or metabolism of oxylipin signaling molecules. In vitro, reduces 9R,13R-12-oxophyodienoic acid (9R,13R-OPDA) to 9R,13R-OPC-8:0, but not 9S,13S-OPDA, the natural precursor of jasmonic acid. Also reduces N-ethylmaleimide and maleic acid. This Solanum lycopersicum (Tomato) protein is 12-oxophytodienoate reductase 1 (OPR1).